Here is a 98-residue protein sequence, read N- to C-terminus: uncharacterized protein (98 aa).

Belongs to the IS150/IS1296 orfA family.

This is an uncharacterized protein from Haemophilus influenzae (strain ATCC 51907 / DSM 11121 / KW20 / Rd).